Here is a 330-residue protein sequence, read N- to C-terminus: Diacylglycerol acyltransferase/mycolyltransferase Ag85A (330 aa).

The first 42 residues, 1-42 (MKFVDRFRGAVAGMLRRLVVEAMGVALLSALIGVVGSAPAEA), serve as a signal peptide directing secretion. Substrate is bound at residue 84–85 (LR). Positions 100 to 110 (FEWYYQSGISV) are fibronectin-binding. An intrachain disulfide couples C129 to C134. Positions 168 and 196 each coordinate substrate. Residue S168 is the Nucleophile of the active site. The active site involves E272. Residues 274–277 (LVRT), K281, and 304–306 (HSW) each bind substrate. Residue H304 is part of the active site.

The protein belongs to the mycobacterial A85 antigen family. Homodimer.

Its subcellular location is the secreted. It localises to the cell wall. The protein localises to the cytoplasm. It catalyses the reaction an acyl-CoA + a 1,2-diacyl-sn-glycerol = a triacyl-sn-glycerol + CoA. It carries out the reaction 2 alpha,alpha'-trehalose 6-mycolate = alpha,alpha'-trehalose 6,6'-bismycolate + alpha,alpha-trehalose. Its function is as follows. The antigen 85 proteins (FbpA, FbpB, FbpC) are responsible for the high affinity of mycobacteria for fibronectin, a large adhesive glycoprotein, which facilitates the attachment of M.tuberculosis to murine alveolar macrophages (AMs). They also help to maintain the integrity of the cell wall by catalyzing the transfer of mycolic acids to cell wall arabinogalactan, and through the synthesis of alpha,alpha-trehalose dimycolate (TDM, cord factor). They catalyze the transfer of a mycoloyl residue from one molecule of alpha,alpha-trehalose monomycolate (TMM) to another TMM, leading to the formation of TDM. FbpA mediates triacylglycerol (TAG) formation with long-chain acyl-CoA as the acyl donor and 1,2-dipalmitoyl-sn-glycerol (1,2-dipalmitin) as the acyl acceptor. It has a preference for C26:0-CoA over C18:1-CoA. The protein is Diacylglycerol acyltransferase/mycolyltransferase Ag85A (fbpA) of Mycobacterium leprae (strain TN).